Reading from the N-terminus, the 202-residue chain is Small ribosomal subunit protein uS4c-1 (202 aa).

Residues 90–152 form the S4 RNA-binding domain; it reads MRLDNIVLRA…NKSRQLIDLN (63 aa).

It belongs to the universal ribosomal protein uS4 family. In terms of assembly, part of the 30S ribosomal subunit. Contacts protein S5. The interaction surface between S4 and S5 is involved in control of translational fidelity.

Its subcellular location is the plastid. The protein localises to the chloroplast. In terms of biological role, one of the primary rRNA binding proteins, it binds directly to 16S rRNA where it nucleates assembly of the body of the 30S subunit. Functionally, with S5 and S12 plays an important role in translational accuracy. This chain is Small ribosomal subunit protein uS4c-1, found in Cyanidium caldarium (Red alga).